The chain runs to 204 residues: MKDTSLPSTAGVVNKLIDSLGKLPGIGPKSAQRLAFYLMRAPEDQVISLSDTIRNIKNQISQCRICCNVADSELCPICQNTKRETNKICVVEQPQDILALEHVGVYRGYYHVLHGAISPTEGITSQNIRINELMVRLDNGQVEEIILATNPTTEGEATAMYLSRLITPLGIKVTRLARGLPFGTELEYADDVTLSRAMEGRQNF.

Residues 63-78 (CRICCNVADSELCPIC) form a C4-type zinc finger. One can recognise a Toprim domain in the interval 86–181 (NKICVVEQPQ…KVTRLARGLP (96 aa)).

This sequence belongs to the RecR family.

May play a role in DNA repair. It seems to be involved in an RecBC-independent recombinational process of DNA repair. It may act with RecF and RecO. In Dehalococcoides mccartyi (strain ATCC BAA-2100 / JCM 16839 / KCTC 5957 / BAV1), this protein is Recombination protein RecR.